A 98-amino-acid polypeptide reads, in one-letter code: MNIKKFQIDGIMNQIQALEYANKMMSTNWGIYTNEPGFQFCDMEFTKKLVGKDYVCPFSSPVNGMLKPALRDLYIAMNEEMIKELKRQLKVIQFGQGN.

This is an uncharacterized protein from Enterobacteria phage T4 (Bacteriophage T4).